Reading from the N-terminus, the 23-residue chain is Ocellatin-LB2 (23 aa).

Asparagine amide is present on asparagine 23.

As to expression, expressed by the skin glands.

The protein localises to the secreted. Its function is as follows. Antibacterial peptide that inhibits the Gram-negative bacterium A.actinomycetemcomitans ATCC 29522 (MIC=210 uM). No activity against the bacteria E.coli ATCC 25922 and S.aureus ATCC 25923, or the fungi C.albicans ATCC 18804 and C.lusitaniae ATCC 56936. Does not show hemolytic activity towards rabbit erythrocytes. The protein is Ocellatin-LB2 of Leptodactylus labyrinthicus (Labyrinth frog).